Here is a 283-residue protein sequence, read N- to C-terminus: Pre-protein-C8 (283 aa).

Positions M1–A40 form a signal peptide, tat-type signal. Positions A61 to Q75 are helix-loop-helix (HLH) region.

As to quaternary structure, immunity protein HalI interacts with Halocin-C8; the interaction is direct. In terms of processing, predicted to be exported by the Tat system. The position of the signal peptide cleavage has not been experimentally proven.

It is found in the secreted. It localises to the cell membrane. In terms of biological role, has antibacterial activity against a wide variety of haloarchaeons. Causes cell lysis and death, possibly by disrupting the cell wall. Acts as an immunity protein for halocin-C8. Able to block the halocin-C8 activity by sequestering the activity of halocin-C8 through specific and direct binding. The chain is Pre-protein-C8 (proC8) from Halobacterium sp. (strain AS7092).